A 1146-amino-acid chain; its full sequence is ATP-dependent helicase/deoxyribonuclease subunit B (1146 aa).

Residues 1–280 form the UvrD-like helicase ATP-binding domain; it reads MSLRFIYGRA…LNSKPLFRFS (280 aa). An ATP-binding site is contributed by 8 to 15; the sequence is GRAGSGKT. In terms of domain architecture, UvrD-like helicase C-terminal spans 276–584; sequence LFRFSQSPEL…LVGSLERSRS (309 aa). [4Fe-4S] cluster contacts are provided by cysteine 786, cysteine 1105, cysteine 1108, and cysteine 1114.

It belongs to the helicase family. AddB/RexB type 1 subfamily. Heterodimer of AddA and AddB. It depends on Mg(2+) as a cofactor. The cofactor is [4Fe-4S] cluster.

Its function is as follows. The heterodimer acts as both an ATP-dependent DNA helicase and an ATP-dependent, dual-direction single-stranded exonuclease. Recognizes the chi site generating a DNA molecule suitable for the initiation of homologous recombination. The AddB subunit has 5' -&gt; 3' nuclease activity but not helicase activity. This Acetivibrio thermocellus (strain ATCC 27405 / DSM 1237 / JCM 9322 / NBRC 103400 / NCIMB 10682 / NRRL B-4536 / VPI 7372) (Clostridium thermocellum) protein is ATP-dependent helicase/deoxyribonuclease subunit B.